We begin with the raw amino-acid sequence, 339 residues long: Peroxidase 29 (339 aa).

The signal sequence occupies residues 1-28 (MKPKSKVAESTAASCFLVMSLLCSCIIG). Intrachain disulfides connect Cys47–Cys127, Cys80–Cys85, Cys133–Cys335, and Cys213–Cys242. His78 serves as the catalytic Proton acceptor. Residues Asp79, Val82, Gly84, Asp86, and Ser88 each contribute to the Ca(2+) site. Position 176 (Pro176) interacts with substrate. His206 lines the heme b pocket. Thr207 contributes to the Ca(2+) binding site. Asn224 carries N-linked (GlcNAc...) asparagine glycosylation. The Ca(2+) site is built by Asp260, Thr262, and Asp267.

The protein belongs to the peroxidase family. Classical plant (class III) peroxidase subfamily. Heme b serves as cofactor. It depends on Ca(2+) as a cofactor.

It localises to the secreted. It catalyses the reaction 2 a phenolic donor + H2O2 = 2 a phenolic radical donor + 2 H2O. In terms of biological role, removal of H(2)O(2), oxidation of toxic reductants, biosynthesis and degradation of lignin, suberization, auxin catabolism, response to environmental stresses such as wounding, pathogen attack and oxidative stress. These functions might be dependent on each isozyme/isoform in each plant tissue. The protein is Peroxidase 29 (PER29) of Arabidopsis thaliana (Mouse-ear cress).